The sequence spans 945 residues: Oxysterol-binding protein homolog C23H4.01c (945 aa).

The region spanning 1-131 (METVEIRSKS…PKTVTFLLTA (131 aa)) is the GOLD domain. The PH domain maps to 149 to 243 (KQIISGTLLK…WCNALEKAKN (95 aa)). 3 positions are modified to phosphoserine: S288, S419, and S421. Disordered stretches follow at residues 396–555 (ESGA…LPHS) and 846–894 (LEKD…MEEK). Residues 443–454 (TSSISDTSSNSS) are compositionally biased toward low complexity. Over residues 460–470 (LNATSLASTVD) the composition is skewed to polar residues. The segment covering 482–499 (ESNKENDIKRKQPFHDLM) has biased composition (basic and acidic residues). Position 503 is a phosphoserine (S503).

This sequence belongs to the OSBP family.

It localises to the cytoplasm. The protein is Oxysterol-binding protein homolog C23H4.01c of Schizosaccharomyces pombe (strain 972 / ATCC 24843) (Fission yeast).